Reading from the N-terminus, the 203-residue chain is Urease accessory protein UreG (203 aa).

Residue 13–20 coordinates GTP; it reads GPVGSGKT.

It belongs to the SIMIBI class G3E GTPase family. UreG subfamily. As to quaternary structure, homodimer. UreD, UreF and UreG form a complex that acts as a GTP-hydrolysis-dependent molecular chaperone, activating the urease apoprotein by helping to assemble the nickel containing metallocenter of UreC. The UreE protein probably delivers the nickel.

Its subcellular location is the cytoplasm. Functionally, facilitates the functional incorporation of the urease nickel metallocenter. This process requires GTP hydrolysis, probably effectuated by UreG. This chain is Urease accessory protein UreG, found in Psychromonas ingrahamii (strain DSM 17664 / CCUG 51855 / 37).